A 209-amino-acid chain; its full sequence is Small ribosomal subunit protein uS3 (209 aa).

The 70-residue stretch at 38–107 (IRKVVKNAYS…RVIVNVEEIK (70 aa)) folds into the KH type-2 domain.

This sequence belongs to the universal ribosomal protein uS3 family. In terms of assembly, part of the 30S ribosomal subunit. Forms a tight complex with proteins S10 and S14.

Binds the lower part of the 30S subunit head. Binds mRNA in the 70S ribosome, positioning it for translation. In Pseudothermotoga lettingae (strain ATCC BAA-301 / DSM 14385 / NBRC 107922 / TMO) (Thermotoga lettingae), this protein is Small ribosomal subunit protein uS3.